Reading from the N-terminus, the 490-residue chain is CUGBP Elav-like family member 1 (490 aa).

RRM domains lie at 16-99 (IKMF…PADS) and 108-188 (RKLF…FADT). Residues 283 to 312 (PSAGSALTTSSSPLSILTSSGSSPSSNNNS) are disordered. The RRM 3 domain maps to 405–483 (ANLFIYHLPQ…KRLKVQLKRS (79 aa)).

It belongs to the CELF/BRUNOL family. As to quaternary structure, oligomer. Oligomerization is required for RNA-binding and EDEN-dependent deadenylation. Phosphorylated during oocyte maturation and dephosphorylated following egg activation. Dephosphorylation is calcium dependent and correlates with the increase in the activity of EDEN-dependent deadenylation.

The protein resides in the nucleus. It localises to the cytoplasm. In terms of biological role, RNA-binding protein implicated in the regulation of several post-transcriptional events. May be involved in pre-mRNA alternative splicing, mRNA translation activation and stability. Mediates the rapid and sequence-specific cytoplasmic deadenylation of EDEN-containing maternal mRNAs following fertilization. Binds to AU-rich sequences (AREs) of jun mRNA. Binds to the embryonic deadenylation element (EDEN) motif localized in the 3'-UTR of maternal mRNAs. Binds to RNA containing several repeats of the consensus sequence 5'-UGU-3'. EDEN-dependent deadenylation is enhanced by the presence of an additional cis element composed of three AUU repeats. This Xenopus tropicalis (Western clawed frog) protein is CUGBP Elav-like family member 1 (celf1).